A 420-amino-acid chain; its full sequence is Cysteate-C-fatty acyltransferase (420 aa).

Pyridoxal 5'-phosphate is bound by residues 114-115, His219, Thr247, and Ala249; that span reads GY. Lys250 bears the N6-(pyridoxal phosphate)lysine mark.

The protein belongs to the class-II pyridoxal-phosphate-dependent aminotransferase family. Pyridoxal 5'-phosphate is required as a cofactor.

The catalysed reaction is isopentadecanoyl-CoA + L-cysteate + H(+) = 3-oxocapnine + CO2 + CoA. Its pathway is lipid metabolism. Functionally, transferase involved in the biosynthesis of capnine, a sulfonolipid present in the outer membrane of gliding Bacteroidetes and essential for gliding motility. Catalyzes the formation of 3-dehydrocapnine from cysteate and isopentadecanoyl-CoA (13-methyl-myristoyl-CoA). In vitro, products are also detected when 13-methyl-myristic acid is substituted with tridecylic acid, myristic acid, pentadecanoic acid or palmitic acid. The polypeptide is Cysteate-C-fatty acyltransferase (Capnocytophaga ochracea (strain ATCC 27872 / DSM 7271 / CCUG 9716 / JCM 12966 / NCTC 12371 / SS31 / VPI 2845) (Bacteroides ochraceus)).